The sequence spans 546 residues: Major facilitator superfamily transporter MPN_077 (546 aa).

12 helical membrane passes run 2–22 (WGLV…IDFI), 62–82 (WTIT…VVKF), 88–108 (VMIM…GSPL), 179–199 (AFFI…IAYA), 220–240 (FWGF…PGVG), 248–268 (VWVV…FAWF), 305–325 (LLAI…QTWF), 344–364 (PILL…LSPF), 377–397 (FIFT…ATLG), 401–421 (VVGF…GWSL), 442–462 (IIFG…DIIT), and 485–505 (IAAI…IIYL).

Belongs to the major facilitator superfamily.

Its subcellular location is the cell membrane. This Mycoplasma pneumoniae (strain ATCC 29342 / M129 / Subtype 1) (Mycoplasmoides pneumoniae) protein is Major facilitator superfamily transporter MPN_077.